Here is an 876-residue protein sequence, read N- to C-terminus: MSKQATLFDFSIKKNESKEQTNQESVEVPKQTANRTKIEWIKEAEDGKVYFLLQVDYDGKKSRAVCKLYDKEGKKIYIMQDESGHKPYFLTDIDPDKVNKITKVVRDPSFDHLELINKVDPYTGKKIRLTKIVVKDPLAVRRMRSSLPKAYEAHIKYYNNYVYDNGLIPGLIYKVNKGKLTQLNPELKGEEINEIKKAFADADEMTKETVNDWIPILETEVPDIKRVSLDIEVYTPNRGRIPDPERAEFPIISVALAGNDGSKIVLALKREDVNSDFSKKDGVQVEIFDSEKKLLARLFEIIREYPMLLTFNGDDFDIPYIYFRALRLNFSPEEVPLDVVSGEGKFLAGIHIDLYKFFFNRAVRIYAFEGKYSEYSLDAVATALLGISKVKLDTFISFLDIDKLIEYNLRDAEITLKLTTFNNNLVLKLMVLLARISKLGLEELTRTEVSTWIKNLYYWEHRKRNWLIPLKEEILVRSNQVKTAAVIKGKKYKGAVVIDPPAGVYFNVVVLDFASLYPSIIKNWNISYETIDIDECTKKVWVEDETGEKLHYVCMDKPGITAVITGLIRDFRVKVYKKKAKYSNISEEQRSLYDVVQRAMKVFINATYGVFGAENFPLYAPAVAESVTAIGRYIITTTYKQAEKLNLKVIYGDTDSLFLYNPTKDKLEELIKFVKQNFNLDLEVDKSYKYVAFSGLKKNYFGVYPDGKTEIKGMLAKKRNTPEFIKKEFAEIKNMLASLNSPNDIPEVKNKLEIKIKDIYNKLRNKGYNLDDLAFRIMLSKPLDSYTKNTPQHVKAGLQLRAFGVNVLPRDVIMFVKVKSKDGVKPIQLAKISEIDIEKYVETLRTTFEQILKAFGISWDEIVSTISIDSFFGSKK.

The protein belongs to the DNA polymerase type-B family.

The enzyme catalyses DNA(n) + a 2'-deoxyribonucleoside 5'-triphosphate = DNA(n+1) + diphosphate. Its function is as follows. This polymerase possesses two enzymatic activities: DNA synthesis (polymerase) and an exonucleolytic activity that degrades single-stranded DNA in the 3'- to 5'-direction. The sequence is that of DNA polymerase 1 (dpo1) from Sulfolobus acidocaldarius (strain ATCC 33909 / DSM 639 / JCM 8929 / NBRC 15157 / NCIMB 11770).